The sequence spans 187 residues: Putative carbonic anhydrase YtiB (187 aa).

Residues cysteine 38, aspartate 40, histidine 96, and cysteine 99 each coordinate Zn(2+).

This sequence belongs to the beta-class carbonic anhydrase family. Requires Zn(2+) as cofactor.

The enzyme catalyses hydrogencarbonate + H(+) = CO2 + H2O. Functionally, reversible hydration of carbon dioxide. The sequence is that of Putative carbonic anhydrase YtiB (ytiB) from Bacillus subtilis (strain 168).